Reading from the N-terminus, the 206-residue chain is MYKQLDTLLAQAGISLTDQQKQRLLGYVSLLDKWNKAYNLTSVREPRDMLVRHIMDSIVVSPYLQGLRFIDVGTGPGLPGIPLAIVRPDANFTLLDSLGKRVRFLRQVQHELRLDNIEPVQSRVEAFVAEPPFDGVISRAFASLQDMVSWCHHLPAAHHGRFYALKGGVPQDELQSLPAGVSVDQLIRLQVPMLEGERHLVVLKSD.

S-adenosyl-L-methionine-binding positions include Gly73, Leu78, 124–125 (VE), and Arg139.

This sequence belongs to the methyltransferase superfamily. RNA methyltransferase RsmG family.

The protein resides in the cytoplasm. The enzyme catalyses guanosine(527) in 16S rRNA + S-adenosyl-L-methionine = N(7)-methylguanosine(527) in 16S rRNA + S-adenosyl-L-homocysteine. In terms of biological role, specifically methylates the N7 position of guanine in position 527 of 16S rRNA. The chain is Ribosomal RNA small subunit methyltransferase G from Edwardsiella ictaluri (strain 93-146).